The following is a 150-amino-acid chain: UPF0756 membrane protein Dd703_1075 (150 aa).

A run of 4 helical transmembrane segments spans residues 8-28 (LLIL…TITL), 51-71 (YGLS…IASG), 81-101 (AFLN…SWLG), and 114-134 (VVAG…GVPV).

The protein belongs to the UPF0756 family.

It localises to the cell membrane. This is UPF0756 membrane protein Dd703_1075 from Musicola paradisiaca (strain Ech703) (Dickeya paradisiaca).